A 554-amino-acid polypeptide reads, in one-letter code: Endochitinase (554 aa).

Residues 1-19 (MRATLATLAVLALATAVQS) form the signal peptide. A GH18 domain is found at 23–398 (ARIVCYFSNW…KILHKHMSSY (376 aa)). A disulfide bridge connects residues Cys27 and Cys52. Chitin is bound at residue 76-77 (LD). N-linked (GlcNAc...) asparagine glycosylation is present at Asn85. Residue 103-106 (GGWA) coordinates chitin. The active-site Proton donor is the Glu146. Chitin contacts are provided by residues Tyr147 and 213–216 (MSYD). A glycan (N-linked (GlcNAc...) asparagine) is linked at Asn303. Trp370 is a binding site for chitin. The segment at 398–494 (YTVPPPHTEN…VPPTENEVDG (97 aa)) is disordered. A compositionally biased stretch (low complexity) spans 431–457 (PTTTTAKPASTTKTTVKTTTTTTAKPP). Over residues 467–477 (INVRPEPKPEP) the composition is skewed to basic and acidic residues. A Chitin-binding type-2 domain is found at 495–553 (SEICNSDQDYIPDKKHCDKYWRCVNGEAMQFSCQHGTVFNVELNVCDWPSNATRRECQQ). Residues Cys527 and Cys540 are joined by a disulfide bond. Asn545 carries N-linked (GlcNAc...) asparagine glycosylation.

The protein belongs to the glycosyl hydrolase 18 family. Chitinase class II subfamily. Epidermis and gut.

It is found in the secreted. It carries out the reaction Random endo-hydrolysis of N-acetyl-beta-D-glucosaminide (1-&gt;4)-beta-linkages in chitin and chitodextrins.. Functionally, digests chitin in the exoskeleton during the molting process. The protein is Endochitinase of Manduca sexta (Tobacco hawkmoth).